Consider the following 230-residue polypeptide: Flagellar L-ring protein (230 aa).

The signal sequence occupies residues 1–18; the sequence is MNRLNIAVSCLATALLFG. Cysteine 19 carries the N-palmitoyl cysteine lipid modification. The S-diacylglycerol cysteine moiety is linked to residue cysteine 19.

Belongs to the FlgH family. The basal body constitutes a major portion of the flagellar organelle and consists of four rings (L,P,S, and M) mounted on a central rod.

The protein localises to the cell outer membrane. It localises to the bacterial flagellum basal body. Assembles around the rod to form the L-ring and probably protects the motor/basal body from shearing forces during rotation. The polypeptide is Flagellar L-ring protein (Legionella pneumophila (strain Paris)).